A 502-amino-acid chain; its full sequence is Type II secretion system protein E (502 aa).

ATP is bound at residue 263 to 270 (GPTGSGKT). 4 residues coordinate Zn(2+): C396, C399, C429, and C432. Positions 461 to 480 (SSEQEMTRHARTSGPSIRDD) are disordered.

Belongs to the GSP E family. As to quaternary structure, homodimer. Dimerization is directed by a relatively short domain near the extreme N-terminus and is essential for extracellular protein secretion. May form homooligomers. Interacts with XcpY/GspL. Forms an inner membrane platform subcomplex with XcpS/GspF, XcpY/GspL and XcpZ/GspM. It depends on Zn(2+) as a cofactor.

It is found in the cell inner membrane. It catalyses the reaction ATP + H2O + cellular proteinSide 1 = ADP + phosphate + cellular proteinSide 2.. ATPase component of the type II secretion system required for the energy-dependent secretion of extracellular factors such as proteases and toxins from the periplasm. Acts as a molecular motor to provide the energy that is required for assembly of the pseudopilus and the extrusion of substrates generated in the cytoplasm. The protein is Type II secretion system protein E (xcpR) of Pseudomonas aeruginosa (strain ATCC 15692 / DSM 22644 / CIP 104116 / JCM 14847 / LMG 12228 / 1C / PRS 101 / PAO1).